The chain runs to 267 residues: Kallikrein-14 (267 aa).

Positions 1–34 (MSLRVLGSGTWPSAPKMFLLLTALQVLAIAMTQS) are cleaved as a signal peptide. The propeptide at 35–40 (QEDENK) is activation peptide. A Peptidase S1 domain is found at 41 to 265 (IIGGHTCTRS…YRSWIEETMR (225 aa)). 5 cysteine pairs are disulfide-bonded: C47–C180, C68–C84, C159–C226, C191–C205, and C216–C241. Residues H83 and D127 each act as charge relay system in the active site. S220 functions as the Charge relay system in the catalytic mechanism.

It belongs to the peptidase S1 family. Kallikrein subfamily. Post-translationally, proteolytic cleavage of the activation peptide produces the active enzyme. In terms of tissue distribution, highly expressed in CNS, bone marrow and fetal liver. Also expressed in breast, thyroid, kidney, colon, pancreas, spleen, prostate, uterus, small intestine, placenta and skeletal muscle. Among 40 tissues tested, the highest expression is detected in skin followed by breast and prostate (at protein level). Expressed in stratum corneum by sweat ducts and sweat glands and detected in sweat (at protein level).

Its subcellular location is the secreted. The protein resides in the extracellular space. Inhibited by SERPINA1, SERPINC1, SERPINE1, SERPINF2, aprotinin, soybean, trypsin inhibitor and leupeptin. Inhibited by serine protease inhibitor SPINK5. Has an autoproteolytic activity which may have a regulatory effect. Activated by citrate and inhibited by zinc and to a lower extent by manganese. In terms of biological role, serine-type endopeptidase with a dual trypsin-like and chymotrypsin-like substrate specificity. May activate/inactivate the proteinase-activated receptors F2R, F2RL1 and F2RL3 and other kallikreins including KLK1, KLK3, KLK5 and KLK11. May function in seminal clot liquefaction through direct cleavage of the semenogelin SEMG1 and SEMG2 and activation of KLK3. May function through desmoglein DSG1 cleavage in epidermal desquamation a process by which the most superficial corneocytes are shed from the skin surface. May be involved in several aspects of tumor progression including growth, invasion and angiogenesis. The chain is Kallikrein-14 (KLK14) from Homo sapiens (Human).